A 96-amino-acid polypeptide reads, in one-letter code: Seed trypsin/chymotrypsin inhibitor IVA (96 aa).

The N-terminal stretch at 1–10 is a signal peptide; the sequence is LSFAANVVNA. A propeptide spanning residues 11 to 24 is cleaved from the precursor; that stretch reads RFDSTSFITQVLSN. 7 disulfides stabilise this stretch: cysteine 32-cysteine 85, cysteine 33-cysteine 48, cysteine 36-cysteine 81, cysteine 38-cysteine 46, cysteine 55-cysteine 62, cysteine 59-cysteine 74, and cysteine 64-cysteine 72. Positions 88-96 are cleaved as a propeptide — removed in PSTI I; sequence SEVEEVIKN.

It belongs to the Bowman-Birk serine protease inhibitor family. Seed.

In terms of biological role, inhibitor of trypsin and of chymotrypsin. May function as a natural phytochemical defense against predators. In Pisum sativum (Garden pea), this protein is Seed trypsin/chymotrypsin inhibitor IVA (TI1236).